Here is a 508-residue protein sequence, read N- to C-terminus: Ribonuclease Y (508 aa).

In terms of domain architecture, KH spans 198–264 (TVSVINLPND…RLTIEKLITD (67 aa)). Residues 324 to 417 (VLTHSIEVAK…VQAADAVSAS (94 aa)) enclose the HD domain.

This sequence belongs to the RNase Y family.

Its function is as follows. Endoribonuclease that initiates mRNA decay. This is Ribonuclease Y from Fusobacterium nucleatum subsp. nucleatum (strain ATCC 25586 / DSM 15643 / BCRC 10681 / CIP 101130 / JCM 8532 / KCTC 2640 / LMG 13131 / VPI 4355).